Consider the following 251-residue polypeptide: PF03932 family protein CutC (251 aa).

It belongs to the CutC family.

Its subcellular location is the cytoplasm. The chain is PF03932 family protein CutC from Erwinia tasmaniensis (strain DSM 17950 / CFBP 7177 / CIP 109463 / NCPPB 4357 / Et1/99).